Consider the following 149-residue polypeptide: Alpha-crystallin A chain (149 aa).

A sHSP domain is found at 41-149 (LFRTVLESGI…DTSYSERPIP (109 aa)). The Zn(2+) site is built by histidine 89, glutamate 91, and histidine 96.

The protein belongs to the small heat shock protein (HSP20) family. As to quaternary structure, heteropolymer composed of three CRYAA and one CRYAB subunits. Inter-subunit bridging via zinc ions enhances stability, which is crucial as there is no protein turn over in the lens. Zinc coordination is achieved at least by His-89, Glu-91 and His-96. His-83 and Glu-85 come from the same molecule within the oligomer, while His-90 residue is provided by another molecule. Can also form homodimers and homotetramers (dimers of dimers) which serve as the building blocks of homooligomers.

The protein resides in the cytoplasm. It is found in the nucleus. In terms of biological role, contributes to the transparency and refractive index of the lens. May act as a chaperone, preventing aggregation of various proteins under a wide range of stress conditions. The sequence is that of Alpha-crystallin A chain (CRYAA) from Trachemys scripta elegans (Red-eared slider turtle).